Here is a 207-residue protein sequence, read N- to C-terminus: MSSQVMHGAAHGHDHGHDDHHHDSGQMTVLGFWLYLMTDCILFASLFATYAVLSGSFAGGPSGHDIFQLDFVAVETLFLLLSSITFGFAMLKMFDGKKAGVLGWLAVTFLFGAGFIAMEIYEFHHLIAEGFGPQRSGFLSGFFALVGTHGLHVTAGLIWMAIMMYQINKHGITPTAKTRMSCLSLFWHFLDVVWICVFTVVYLLGVL.

The Cytoplasmic portion of the chain corresponds to 1 to 26 (MSSQVMHGAAHGHDHGHDDHHHDSGQ). The chain crosses the membrane as a helical span at residues 27–47 (MTVLGFWLYLMTDCILFASLF). Over 48 to 70 (ATYAVLSGSFAGGPSGHDIFQLD) the chain is Periplasmic. Residues 71-91 (FVAVETLFLLLSSITFGFAML) traverse the membrane as a helical segment. The Cytoplasmic segment spans residues 92–99 (KMFDGKKA). Residues 100–120 (GVLGWLAVTFLFGAGFIAMEI) traverse the membrane as a helical segment. Over 121 to 141 (YEFHHLIAEGFGPQRSGFLSG) the chain is Periplasmic. A helical transmembrane segment spans residues 142-162 (FFALVGTHGLHVTAGLIWMAI). Residues 163–185 (MMYQINKHGITPTAKTRMSCLSL) are Cytoplasmic-facing. A helical membrane pass occupies residues 186 to 206 (FWHFLDVVWICVFTVVYLLGV). Leu207 is a topological domain (periplasmic).

The protein belongs to the cytochrome c oxidase subunit 3 family. As to quaternary structure, heterooctamer of two A chains, two B chains, two C chains and two D chains.

The protein localises to the cell inner membrane. Functionally, cytochrome bo(3) ubiquinol terminal oxidase is the component of the aerobic respiratory chain of E.coli that predominates when cells are grown at high aeration. Has proton pump activity across the membrane in addition to electron transfer, pumping 2 protons/electron. This Pseudomonas putida (Arthrobacter siderocapsulatus) protein is Cytochrome bo(3) ubiquinol oxidase subunit 3 (cyoC).